Reading from the N-terminus, the 1413-residue chain is DNA-directed RNA polymerase subunit beta' (1413 aa).

4 residues coordinate Zn(2+): Cys70, Cys72, Cys85, and Cys88. Mg(2+)-binding residues include Asp460, Asp462, and Asp464. Positions 819, 893, 900, and 903 each coordinate Zn(2+). The segment at 1392–1413 (EEAFDFGTPSAPAEEPQHPAAE) is disordered.

It belongs to the RNA polymerase beta' chain family. In terms of assembly, the RNAP catalytic core consists of 2 alpha, 1 beta, 1 beta' and 1 omega subunit. When a sigma factor is associated with the core the holoenzyme is formed, which can initiate transcription. Mg(2+) serves as cofactor. Requires Zn(2+) as cofactor.

It carries out the reaction RNA(n) + a ribonucleoside 5'-triphosphate = RNA(n+1) + diphosphate. DNA-dependent RNA polymerase catalyzes the transcription of DNA into RNA using the four ribonucleoside triphosphates as substrates. In Burkholderia cenocepacia (strain ATCC BAA-245 / DSM 16553 / LMG 16656 / NCTC 13227 / J2315 / CF5610) (Burkholderia cepacia (strain J2315)), this protein is DNA-directed RNA polymerase subunit beta'.